The chain runs to 266 residues: Protein SCO2 homolog, mitochondrial (266 aa).

Residues 1–41 (MLLLARPPKAWHRLFQLQPLALLGTPGGKTQHVRYQLFSTP) constitute a mitochondrion transit peptide. At 42–60 (GPADTGRQGQPQGPGLRTR) the chain is on the mitochondrial matrix side. The chain crosses the membrane as a helical span at residues 61–78 (LLVTALVGAGLGGAWLAL). Residues 79–266 (RAEKERGRQQ…HMAAFRSVLR (188 aa)) are Mitochondrial intermembrane-facing. Residues 85 to 259 (GRQQQRTEAL…ITDSVRRHMA (175 aa)) enclose the Thioredoxin domain. Cysteine 133, cysteine 137, and histidine 224 together coordinate Cu cation. A disulfide bond links cysteine 133 and cysteine 137.

This sequence belongs to the SCO1/2 family. Homodimer. Interacts with COA6. Found in a complex with TMEM177, COX20, COA6, MT-CO2/COX2, COX18 and SCO1. Interacts with TMEM177 in a COX20-dependent manner. Interacts with COX20 in a MT-CO2/COX2- and COX18-dependent manner. Interacts with COX16.

It localises to the mitochondrion inner membrane. Copper metallochaperone essential for the synthesis and maturation of cytochrome c oxidase subunit II (MT-CO2/COX2) by facilitating the incorporation of copper into the Cu(A) site of MT-CO2/COX2. Could also act as a thiol-disulfide oxidoreductase to regulate the redox state of the cysteines in SCO1 during maturation of MT-CO2/COX2. This is Protein SCO2 homolog, mitochondrial (SCO2) from Bos taurus (Bovine).